A 1029-amino-acid polypeptide reads, in one-letter code: Putative B3 domain-containing protein Os03g0621600 (1029 aa).

DNA-binding regions (TF-B3) lie at residues 147 to 240 (DTYF…FDPS), 339 to 430 (VAVM…RKMK), and 450 to 543 (EKYF…FDPS). A disordered region spans residues 572–605 (TSYHDQPKGNKHWMQKDSSSKGNKIGNTRSSNTP). The segment covering 591–605 (SKGNKIGNTRSSNTP) has biased composition (polar residues). A DNA-binding region (TF-B3 4) is located at residues 731 to 824 (YKNFFKVMIG…KLKVLIFGPS (94 aa)). The segment covering 852-867 (SSNSHDLPVKSPQNVS) has biased composition (polar residues). The interval 852–882 (SSNSHDLPVKSPQNVSKSEKQWDSSEQENDT) is disordered. The TF-B3 5 DNA-binding region spans 934–1029 (GCILRKSRVH…SMNVHIIPKK (96 aa)).

The protein resides in the nucleus. In Oryza sativa subsp. japonica (Rice), this protein is Putative B3 domain-containing protein Os03g0621600.